The following is a 534-amino-acid chain: Phosphoenolpyruvate carboxykinase (ATP) (534 aa).

Positions 59, 200, and 206 each coordinate substrate. Residues lysine 206, histidine 225, and 242-250 each bind ATP; that span reads GLSGTGKTT. Mn(2+) contacts are provided by lysine 206 and histidine 225. Mn(2+) is bound at residue aspartate 263. ATP contacts are provided by residues glutamate 291, arginine 327, 443 to 444, and threonine 449; that span reads RI. Arginine 327 lines the substrate pocket.

It belongs to the phosphoenolpyruvate carboxykinase (ATP) family. It depends on Mn(2+) as a cofactor.

It is found in the cytoplasm. The catalysed reaction is oxaloacetate + ATP = phosphoenolpyruvate + ADP + CO2. It participates in carbohydrate biosynthesis; gluconeogenesis. Functionally, involved in the gluconeogenesis. Catalyzes the conversion of oxaloacetate (OAA) to phosphoenolpyruvate (PEP) through direct phosphoryl transfer between the nucleoside triphosphate and OAA. In Lachnospira eligens (strain ATCC 27750 / DSM 3376 / VPI C15-48 / C15-B4) (Eubacterium eligens), this protein is Phosphoenolpyruvate carboxykinase (ATP).